The chain runs to 380 residues: Cytochrome b (380 aa).

Helical transmembrane passes span 34–54, 78–99, 114–134, and 179–199; these read YGSL…FLAM, WLMR…YLHI, WNIG…GYVL, and FFTF…LHLL. Residues His84 and His98 each contribute to the heme b site. The heme b site is built by His183 and His197. His202 serves as a coordination point for a ubiquinone. The next 4 membrane-spanning stretches (helical) occupy residues 227-247, 289-309, 321-341, and 348-368; these read YKDT…STTN, LGGV…PSLH, LSQL…WIGG, and FILI…VLLP.

This sequence belongs to the cytochrome b family. In terms of assembly, the cytochrome bc1 complex contains 3 respiratory subunits (MT-CYB, CYC1 and UQCRFS1), 2 core proteins (UQCRC1 and UQCRC2) and probably 6 low-molecular weight proteins. It depends on heme b as a cofactor.

The protein resides in the mitochondrion inner membrane. In terms of biological role, component of the ubiquinol-cytochrome c reductase complex (complex III or cytochrome b-c1 complex) that is part of the mitochondrial respiratory chain. The b-c1 complex mediates electron transfer from ubiquinol to cytochrome c. Contributes to the generation of a proton gradient across the mitochondrial membrane that is then used for ATP synthesis. The polypeptide is Cytochrome b (mt-cyb) (Typhlonectes natans (Rubber eel)).